A 509-amino-acid chain; its full sequence is Lanosterol 14-alpha demethylase (509 aa).

The chain crosses the membrane as a helical span at residues 30–50 (GNLLSMLLIACAFTLSLVYLI). Residue Cys-455 participates in heme binding.

Belongs to the cytochrome P450 family. Heme is required as a cofactor. Ubiquitinated by MARCHF6, leading to proteasomal degradation. Ubiquitously expressed with highest levels in testis, ovary, adrenal, prostate, liver, kidney and lung.

Its subcellular location is the endoplasmic reticulum membrane. It localises to the microsome membrane. The catalysed reaction is a 14alpha-methyl steroid + 3 reduced [NADPH--hemoprotein reductase] + 3 O2 = a Delta(14) steroid + formate + 3 oxidized [NADPH--hemoprotein reductase] + 4 H2O + 4 H(+). It carries out the reaction lanosterol + 3 reduced [NADPH--hemoprotein reductase] + 3 O2 = 4,4-dimethyl-5alpha-cholesta-8,14,24-trien-3beta-ol + formate + 3 oxidized [NADPH--hemoprotein reductase] + 4 H2O + 4 H(+). It catalyses the reaction 24,25-dihydrolanosterol + 3 reduced [NADPH--hemoprotein reductase] + 3 O2 = 4,4-dimethyl-8,14-cholestadien-3beta-ol + formate + 3 oxidized [NADPH--hemoprotein reductase] + 4 H2O + 4 H(+). The enzyme catalyses a 14alpha-methyl steroid + reduced [NADPH--hemoprotein reductase] + O2 = a 14alpha-hydroxymethyl steroid + oxidized [NADPH--hemoprotein reductase] + H2O + H(+). The catalysed reaction is a 14alpha-hydroxymethyl steroid + reduced [NADPH--hemoprotein reductase] + O2 = a 14alpha-formyl steroid + oxidized [NADPH--hemoprotein reductase] + 2 H2O + H(+). It carries out the reaction a 14alpha-formyl steroid + reduced [NADPH--hemoprotein reductase] + O2 = a Delta(14) steroid + formate + oxidized [NADPH--hemoprotein reductase] + H2O + 2 H(+). It catalyses the reaction lanosterol + reduced [NADPH--hemoprotein reductase] + O2 = 32-hydroxylanosterol + oxidized [NADPH--hemoprotein reductase] + H2O + H(+). The enzyme catalyses 32-hydroxylanosterol + reduced [NADPH--hemoprotein reductase] + O2 = 32-oxolanosterol + oxidized [NADPH--hemoprotein reductase] + 2 H2O + H(+). The catalysed reaction is 32-oxolanosterol + reduced [NADPH--hemoprotein reductase] + O2 = 4,4-dimethyl-5alpha-cholesta-8,14,24-trien-3beta-ol + formate + oxidized [NADPH--hemoprotein reductase] + H2O + 2 H(+). It carries out the reaction 24,25-dihydrolanosterol + reduced [NADPH--hemoprotein reductase] + O2 = 32-hydroxy-24,25-dihydrolanosterol + oxidized [NADPH--hemoprotein reductase] + H2O + H(+). It catalyses the reaction 32-hydroxy-24,25-dihydrolanosterol + reduced [NADPH--hemoprotein reductase] + O2 = 32-oxo-24,25-dihydrolanosterol + oxidized [NADPH--hemoprotein reductase] + 2 H2O + H(+). The enzyme catalyses 32-oxo-24,25-dihydrolanosterol + reduced [NADPH--hemoprotein reductase] + O2 = 4,4-dimethyl-8,14-cholestadien-3beta-ol + formate + oxidized [NADPH--hemoprotein reductase] + H2O + 2 H(+). It participates in steroid biosynthesis; zymosterol biosynthesis; zymosterol from lanosterol: step 1/6. Its activity is regulated as follows. Inhibited by azalanstat. Inhibited by azole antifungal agents ketoconazole, itraconazole and fluconazole. Functionally, sterol 14alpha-demethylase that plays a critical role in the cholesterol biosynthesis pathway, being cholesterol the major sterol component in mammalian membranes as well as a precursor for bile acid and steroid hormone synthesis. Cytochrome P450 monooxygenase that catalyzes the three-step oxidative removal of the 14alpha-methyl group (C-32) of sterols such as lanosterol (lanosta-8,24-dien-3beta-ol) and 24,25-dihydrolanosterol (DHL) in the form of formate, and converts the sterols to 4,4-dimethyl-5alpha-cholesta-8,14,24-trien-3beta-ol and 4,4-dimethyl-8,14-cholestadien-3beta-ol, respectively, which are intermediates of cholesterol biosynthesis. Can also demethylate substrates not intrinsic to mammals, such as eburicol (24-methylene-24,25-dihydrolanosterol), but at a lower rate than DHL. The polypeptide is Lanosterol 14-alpha demethylase (Homo sapiens (Human)).